A 143-amino-acid polypeptide reads, in one-letter code: Transcriptional regulator MraZ (143 aa).

SpoVT-AbrB domains are found at residues E5–E47 and A76–R119.

The protein belongs to the MraZ family. Forms oligomers.

It localises to the cytoplasm. Its subcellular location is the nucleoid. This Brevibacillus brevis (strain 47 / JCM 6285 / NBRC 100599) protein is Transcriptional regulator MraZ.